The sequence spans 607 residues: Glutamine--fructose-6-phosphate aminotransferase [isomerizing] (607 aa).

Catalysis depends on Cys-2, which acts as the Nucleophile; for GATase activity. A Glutamine amidotransferase type-2 domain is found at 2–217; it reads CGIVGIVGHS…DGDWAVVRRD (216 aa). 2 consecutive SIS domains span residues 283–422 and 455–597; these read LPFD…ARGV and IARE…VDQP. The For Fru-6P isomerization activity role is filled by Lys-602.

As to quaternary structure, homodimer.

It is found in the cytoplasm. It carries out the reaction D-fructose 6-phosphate + L-glutamine = D-glucosamine 6-phosphate + L-glutamate. In terms of biological role, catalyzes the first step in hexosamine metabolism, converting fructose-6P into glucosamine-6P using glutamine as a nitrogen source. This is Glutamine--fructose-6-phosphate aminotransferase [isomerizing] from Mesorhizobium japonicum (strain LMG 29417 / CECT 9101 / MAFF 303099) (Mesorhizobium loti (strain MAFF 303099)).